A 91-amino-acid chain; its full sequence is MALLKFFISKKEITSDIAKERLQIIVSEQRKNSKEPNYLPMLKKDLIKVIKKYINLNSETLCVKLDHKNKKNIKIFELNIVFPEKNFLNKK.

The protein belongs to the MinE family.

In terms of biological role, prevents the cell division inhibition by proteins MinC and MinD at internal division sites while permitting inhibition at polar sites. This ensures cell division at the proper site by restricting the formation of a division septum at the midpoint of the long axis of the cell. The protein is Cell division topological specificity factor of Wigglesworthia glossinidia brevipalpis.